A 263-amino-acid polypeptide reads, in one-letter code: tRNA (guanine-N(7)-)-methyltransferase (263 aa).

The disordered stretch occupies residues 1–39 (MVHHGQMHAQPGVGLRPDTPVASGQLPSTSIRSRRSGIS). 4 residues coordinate S-adenosyl-L-methionine: E82, D107, N136, and D159. D159 is an active-site residue. Residues K163, D195, and 232 to 235 (TKYE) contribute to the substrate site.

This sequence belongs to the class I-like SAM-binding methyltransferase superfamily. TrmB family.

The enzyme catalyses guanosine(46) in tRNA + S-adenosyl-L-methionine = N(7)-methylguanosine(46) in tRNA + S-adenosyl-L-homocysteine. It functions in the pathway tRNA modification; N(7)-methylguanine-tRNA biosynthesis. In terms of biological role, catalyzes the formation of N(7)-methylguanine at position 46 (m7G46) in tRNA. The chain is tRNA (guanine-N(7)-)-methyltransferase from Mycobacterium bovis (strain ATCC BAA-935 / AF2122/97).